The following is a 208-amino-acid chain: Hypoxanthine-guanine phosphoribosyltransferase (208 aa).

Residues Lys-63, 122–130 (EDIVDSAIT), Lys-154, and Asp-182 contribute to the GMP site. Asp-126 serves as the catalytic Proton acceptor. Asp-182 is a binding site for Mg(2+).

It belongs to the purine/pyrimidine phosphoribosyltransferase family. Mg(2+) is required as a cofactor.

The protein localises to the cytoplasm. The catalysed reaction is IMP + diphosphate = hypoxanthine + 5-phospho-alpha-D-ribose 1-diphosphate. It carries out the reaction GMP + diphosphate = guanine + 5-phospho-alpha-D-ribose 1-diphosphate. It participates in purine metabolism; IMP biosynthesis via salvage pathway; IMP from hypoxanthine: step 1/1. In terms of biological role, converts guanine to guanosine monophosphate, and hypoxanthine to inosine monophosphate. Transfers the 5-phosphoribosyl group from 5-phosphoribosylpyrophosphate onto the purine. Plays a central role in the generation of purine nucleotides through the purine salvage pathway. This chain is Hypoxanthine-guanine phosphoribosyltransferase (HGPRT), found in Crithidia fasciculata.